Reading from the N-terminus, the 249-residue chain is DNA polymerase sliding clamp 1 (249 aa).

This sequence belongs to the PCNA family. Homotrimer. The subunits circularize to form a toroid; DNA passes through its center. Replication factor C (RFC) is required to load the toroid on the DNA.

Functionally, sliding clamp subunit that acts as a moving platform for DNA processing. Responsible for tethering the catalytic subunit of DNA polymerase and other proteins to DNA during high-speed replication. The polypeptide is DNA polymerase sliding clamp 1 (Pyrobaculum aerophilum (strain ATCC 51768 / DSM 7523 / JCM 9630 / CIP 104966 / NBRC 100827 / IM2)).